The following is a 621-amino-acid chain: NADPH-dependent diflavin oxidoreductase 1 (621 aa).

Residues 6–168 (IAVLYGSETG…VYFEFEKRII (163 aa)) enclose the Flavodoxin-like domain. FMN is bound by residues 12-17 (SETGNA), 59-62 (STTG), 106-115 (LGDSSYPKFN), and Glu-142. The FAD-binding FR-type domain maps to 224–489 (KLIKTGTITL…VGPGVGLAPL (266 aa)). FAD contacts are provided by residues Arg-381, 411-414 (RLYS), and 443-446 (GVCT). NADP(+) is bound by residues 536–537 (SR) and 545–549 (TKYVQ). Residue Trp-621 coordinates FAD.

It belongs to the NADPH-dependent diflavin oxidoreductase NDOR1 family. This sequence in the N-terminal section; belongs to the flavodoxin family. In the C-terminal section; belongs to the flavoprotein pyridine nucleotide cytochrome reductase family. Interacts with DRE2; as part of the cytosolic iron-sulfur (Fe-S) protein assembly (CIA) machinery. The cofactor is FAD. It depends on FMN as a cofactor.

It is found in the cytoplasm. The protein localises to the mitochondrion. It carries out the reaction 2 oxidized [2Fe-2S]-[protein] + NADPH = 2 reduced [2Fe-2S]-[protein] + NADP(+) + H(+). Its function is as follows. NADPH-dependent reductase which is a central component of the cytosolic iron-sulfur (Fe-S) protein assembly (CIA) machinery. Transfers electrons from NADPH via its FAD and FMN prosthetic groups to the [2Fe-2S] cluster of DRE2, another key component of the CIA machinery. In turn, this reduced cluster provides electrons for assembly of cytosolic iron-sulfur cluster proteins. Positively controls H(2)O(2)-induced cell death. The polypeptide is NADPH-dependent diflavin oxidoreductase 1 (Candida glabrata (strain ATCC 2001 / BCRC 20586 / JCM 3761 / NBRC 0622 / NRRL Y-65 / CBS 138) (Yeast)).